A 467-amino-acid chain; its full sequence is Argininosuccinate lyase (467 aa).

Belongs to the lyase 1 family. Argininosuccinate lyase subfamily.

It is found in the cytoplasm. The catalysed reaction is 2-(N(omega)-L-arginino)succinate = fumarate + L-arginine. It participates in amino-acid biosynthesis; L-arginine biosynthesis; L-arginine from L-ornithine and carbamoyl phosphate: step 3/3. This chain is Argininosuccinate lyase, found in Rhizobium etli (strain CIAT 652).